The following is an 81-amino-acid chain: MQKLTILLLVAAVLMSTQALNQEQHQRAKINLLSKRKPPAERWWRWGGCMLWFGRCTKDSECCSNSCDRTYCELARFPSDW.

The N-terminal stretch at Met-1 to Ala-19 is a signal peptide. The propeptide occupies Leu-20–Arg-42. Cystine bridges form between Cys-49/Cys-63, Cys-56/Cys-67, and Cys-62/Cys-72.

Belongs to the conotoxin O2 superfamily. Expressed by the venom duct.

It is found in the secreted. Its function is as follows. Gamma-conotoxins may act on voltage-gated non-specific cation pacemaker channels (HCN). In Conus textile (Cloth-of-gold cone), this protein is Gamma-conotoxin-like TeA53.